Reading from the N-terminus, the 20-residue chain is Putative beta-neurotoxin (20 aa).

An LCN-type CS-alpha/beta domain is found at lysine 1–glycine 20.

In terms of tissue distribution, expressed by the venom gland.

The protein localises to the secreted. Beta toxins bind voltage-independently at site-4 of sodium channels (Nav) and shift the voltage of activation toward more negative potentials thereby affecting sodium channel activation and promoting spontaneous and repetitive firing. In Tityus pachyurus (Colombian scorpion), this protein is Putative beta-neurotoxin.